Here is a 259-residue protein sequence, read N- to C-terminus: Ras-related protein Rab-34 (259 aa).

M1 is modified (N-acetylmethionine). GTP is bound by residues S62, V63, G64, K65, T66, D78, Y81, and T84. T66 contributes to the Mg(2+) binding site. A Switch 1 motif is present at residues 71 to 89 (RFCKDTFDKNYKATIGVDF). The Mg(2+) site is built by T84 and D107. Residues 108–127 (TAGQERFKCIASTYYRGAQA) carry the Switch 2 motif. Residues G110, K167, D169, and S198 each coordinate GTP. Phosphoserine occurs at positions 241 and 244. S-geranylgeranyl cysteine attachment occurs at residues C257 and C258.

Belongs to the small GTPase superfamily. Rab family. In terms of assembly, interacts with RILP. The GTP-bound form interacts with REP15. The cofactor is Mg(2+).

Its subcellular location is the cytoplasm. The protein resides in the golgi apparatus. It is found in the cytoplasmic vesicle. The protein localises to the phagosome. It localises to the phagosome membrane. Its subcellular location is the cell projection. The protein resides in the cilium. It is found in the cytoskeleton. The protein localises to the microtubule organizing center. It localises to the centrosome. Its subcellular location is the centriole. The enzyme catalyses GTP + H2O = GDP + phosphate + H(+). Regulated by guanine nucleotide exchange factors (GEFs) which promote the exchange of bound GDP for free GTP. Regulated by GTPase activating proteins (GAPs) which increase the GTP hydrolysis activity. Inhibited by GDP dissociation inhibitors (GDIs). Its function is as follows. The small GTPases Rab are key regulators of intracellular membrane trafficking, from the formation of transport vesicles to their fusion with membranes. Rabs cycle between an inactive GDP-bound form and an active GTP-bound form that is able to recruit to membranes different sets of downstream effectors directly responsible for vesicle formation, movement, tethering and fusion. RAB34 transports protein involved in the redistribution of lysosomes to the peri-Golgi region. Plays a role in the maturation of phagosomes that engulf pathogens, such as S.aureus and M.tuberculosis. Plays a role in the fusion of phagosomes with lysosomes. Involved in ciliogenesis. In particular, it is required for early steps of the intracellular cilium assembly pathway initiated by trafficking and docking of ciliary vesicles to the centrioles in the cytoplasm, followed by axoneme formation in the cytoplasm. After axoneme elongation, the centrioles migrate close to the cell surface so that ciliary vesicles can fuse with the plasma membrane to expose cilia to the extracellular space. It seems dispensable for ciliogenesis via the extracellular pathway where cilium assembly begins after migration and docking of the centriole to the plasma membrane. Also acts as a positive regulator of hedgehog signaling and regulates ciliary function. This is Ras-related protein Rab-34 from Homo sapiens (Human).